Consider the following 309-residue polypeptide: Olfactory receptor 7A17 (309 aa).

At 1-25 (MEPENDTGISEFVLLGLSEEPELQP) the chain is on the extracellular side. A glycan (N-linked (GlcNAc...) asparagine) is linked at asparagine 5. A helical membrane pass occupies residues 26–46 (FLFGLFLSMYLVTVLGNLLII). Residues 47–54 (LATISDSH) are Cytoplasmic-facing. The helical transmembrane segment at 55-75 (LHTPMYFFLSNLSFADICFIS) threads the bilayer. Topologically, residues 76-99 (TTIPKMLINIQTQSRVITYAGCIT) are extracellular. The cysteines at positions 97 and 189 are disulfide-linked. Residues 100–120 (QMCFFVLFGGLDSLLLAVMAY) form a helical membrane-spanning segment. The Cytoplasmic segment spans residues 121–139 (DRFVAICHPLHYTVIMNPR). The chain crosses the membrane as a helical span at residues 140–160 (LCGLLVLASWMIAALNSLSQS). The Extracellular segment spans residues 161-197 (LMVLWLSFCTDLEIPHFFCELNQVIHLACSDTFLNDM). A helical transmembrane segment spans residues 198-217 (GMYFAAGLLAGGPLVGILCS). At 218-237 (YSKIVSSIRAISSAQGKYKA) the chain is on the cytoplasmic side. Residues 238-258 (FSTCASHLSVVSLFCCTGLGV) form a helical membrane-spanning segment. The Extracellular segment spans residues 259-271 (YLTSAATHNSHTS). The chain crosses the membrane as a helical span at residues 272-292 (ATASVMYTVATPMLNPFIYSL). Topologically, residues 293–309 (RNKDIKRALKMSFRGKQ) are cytoplasmic.

It belongs to the G-protein coupled receptor 1 family.

The protein localises to the cell membrane. In terms of biological role, odorant receptor. This Homo sapiens (Human) protein is Olfactory receptor 7A17 (OR7A17).